The following is a 298-amino-acid chain: Ribosomal RNA small subunit methyltransferase H (298 aa).

S-adenosyl-L-methionine contacts are provided by residues 37-39 (GGH), Asp57, Leu91, Asp105, and Gln112.

The protein belongs to the methyltransferase superfamily. RsmH family.

Its subcellular location is the cytoplasm. It carries out the reaction cytidine(1402) in 16S rRNA + S-adenosyl-L-methionine = N(4)-methylcytidine(1402) in 16S rRNA + S-adenosyl-L-homocysteine + H(+). Functionally, specifically methylates the N4 position of cytidine in position 1402 (C1402) of 16S rRNA. This Kosmotoga olearia (strain ATCC BAA-1733 / DSM 21960 / TBF 19.5.1) protein is Ribosomal RNA small subunit methyltransferase H.